A 397-amino-acid chain; its full sequence is Succinate--CoA ligase [ADP-forming] subunit beta (397 aa).

In terms of domain architecture, ATP-grasp spans 9–254; sequence KALLREFGVP…ESEEDAKEIE (246 aa). Residues Lys-46, 53–55, Glu-109, Ser-112, and Glu-117 contribute to the ATP site; that span reads GRG. Residues Asn-209 and Asp-223 each contribute to the Mg(2+) site. Residues Asn-274 and 331-333 contribute to the substrate site; that span reads GIM.

The protein belongs to the succinate/malate CoA ligase beta subunit family. In terms of assembly, heterotetramer of two alpha and two beta subunits. It depends on Mg(2+) as a cofactor.

It carries out the reaction succinate + ATP + CoA = succinyl-CoA + ADP + phosphate. The enzyme catalyses GTP + succinate + CoA = succinyl-CoA + GDP + phosphate. The protein operates within carbohydrate metabolism; tricarboxylic acid cycle; succinate from succinyl-CoA (ligase route): step 1/1. Functionally, succinyl-CoA synthetase functions in the citric acid cycle (TCA), coupling the hydrolysis of succinyl-CoA to the synthesis of either ATP or GTP and thus represents the only step of substrate-level phosphorylation in the TCA. The beta subunit provides nucleotide specificity of the enzyme and binds the substrate succinate, while the binding sites for coenzyme A and phosphate are found in the alpha subunit. This is Succinate--CoA ligase [ADP-forming] subunit beta from Nitrobacter hamburgensis (strain DSM 10229 / NCIMB 13809 / X14).